The following is a 430-amino-acid chain: Putative ABC transporter periplasmic-binding protein YcjN (430 aa).

The first 19 residues, 1–19, serve as a signal peptide directing secretion; sequence MIKSKIVLLSALVSCALIS.

The protein belongs to the bacterial solute-binding protein 1 family.

It is found in the periplasm. Probably part of the binding-protein-dependent transport system YcjNOP. In Escherichia coli (strain K12), this protein is Putative ABC transporter periplasmic-binding protein YcjN (ycjN).